Reading from the N-terminus, the 497-residue chain is Cobyrinate a,c-diamide synthase (497 aa).

The GATase cobBQ-type domain maps to 273 to 478 (RIGIALDEAF…AHLHGVAYRE (206 aa)). The active-site Nucleophile is the Cys-355.

Belongs to the CobB/CbiA family. The cofactor is Mg(2+).

The catalysed reaction is cob(II)yrinate + 2 L-glutamine + 2 ATP + 2 H2O = cob(II)yrinate a,c diamide + 2 L-glutamate + 2 ADP + 2 phosphate + 2 H(+). It catalyses the reaction Ni-sirohydrochlorin + 2 L-glutamine + 2 ATP + 2 H2O = Ni-sirohydrochlorin a,c-diamide + 2 L-glutamate + 2 ADP + 2 phosphate + 2 H(+). It functions in the pathway cofactor biosynthesis; adenosylcobalamin biosynthesis; cob(II)yrinate a,c-diamide from sirohydrochlorin (anaerobic route): step 10/10. Catalyzes the ATP-dependent amidation of the two carboxylate groups at positions a and c of cobyrinate, using either L-glutamine or ammonia as the nitrogen source (Potential). Involved in the biosynthesis of the unique nickel-containing tetrapyrrole coenzyme F430, the prosthetic group of methyl-coenzyme M reductase (MCR), which plays a key role in methanogenesis and anaerobic methane oxidation. Catalyzes the ATP-dependent amidation of the two carboxylate groups at positions a and c of Ni-sirohydrochlorin, using L-glutamine or ammonia as the nitrogen source. This is Cobyrinate a,c-diamide synthase from Methanosarcina acetivorans (strain ATCC 35395 / DSM 2834 / JCM 12185 / C2A).